A 430-amino-acid chain; its full sequence is Shufflon protein A' (430 aa).

The constant region stretch occupies residues 1 to 361; it reads MKKYDRGWAS…TGAILSCQSG (361 aa). The tract at residues 362–430 is variable region; sequence TWGTIGGKLK…GCIASCVTLN (69 aa).

This chain is Shufflon protein A', found in Escherichia coli.